The primary structure comprises 425 residues: Multifunctional CCA protein (425 aa).

Positions 8 and 11 each coordinate ATP. CTP contacts are provided by G8 and R11. Positions 21 and 23 each coordinate Mg(2+). R91, R141, and R144 together coordinate ATP. R91, R141, and R144 together coordinate CTP. The region spanning T230–I331 is the HD domain.

Belongs to the tRNA nucleotidyltransferase/poly(A) polymerase family. Bacterial CCA-adding enzyme type 1 subfamily. As to quaternary structure, monomer. Can also form homodimers and oligomers. It depends on Mg(2+) as a cofactor. Ni(2+) is required as a cofactor.

The enzyme catalyses a tRNA precursor + 2 CTP + ATP = a tRNA with a 3' CCA end + 3 diphosphate. It catalyses the reaction a tRNA with a 3' CCA end + 2 CTP + ATP = a tRNA with a 3' CCACCA end + 3 diphosphate. In terms of biological role, catalyzes the addition and repair of the essential 3'-terminal CCA sequence in tRNAs without using a nucleic acid template. Adds these three nucleotides in the order of C, C, and A to the tRNA nucleotide-73, using CTP and ATP as substrates and producing inorganic pyrophosphate. tRNA 3'-terminal CCA addition is required both for tRNA processing and repair. Also involved in tRNA surveillance by mediating tandem CCA addition to generate a CCACCA at the 3' terminus of unstable tRNAs. While stable tRNAs receive only 3'-terminal CCA, unstable tRNAs are marked with CCACCA and rapidly degraded. The sequence is that of Multifunctional CCA protein from Acidovorax ebreus (strain TPSY) (Diaphorobacter sp. (strain TPSY)).